Consider the following 142-residue polypeptide: AP-2 complex subunit sigma (142 aa).

The protein belongs to the adaptor complexes small subunit family. As to quaternary structure, adaptor protein complex 2 (AP-2) is a heterotetramer composed of two large adaptins (alpha-type and beta-type subunits), a medium adaptin (mu-type subunit) and a small adaptin (sigma-type subunit).

Its subcellular location is the cell membrane. The protein resides in the membrane. It is found in the coated pit. Its function is as follows. Subunit of the adaptor protein complex 2 (AP-2). Adaptor protein complexes function in protein transport via transport vesicles in different membrane traffic pathways. Adaptor protein complexes are vesicle coat components and appear to be involved in cargo selection and vesicle formation. AP-2 is involved in clathrin-dependent endocytosis in which cargo proteins are incorporated into vesicles surrounded by clathrin (clathrin-coated vesicles, CCVs) which are destined for fusion with the early endosome. The complex binds polyphosphoinositides. The chain is AP-2 complex subunit sigma (AP17) from Arabidopsis thaliana (Mouse-ear cress).